The primary structure comprises 170 residues: Large ribosomal subunit protein bL17 (170 aa).

A compositionally biased stretch (low complexity) spans 134–144; the sequence is ASAKAAQAQEK. The tract at residues 134–170 is disordered; that stretch reads ASAKAAQAQEKPAQEEEVEATSDEVAYTSEPDKAAEH.

The protein belongs to the bacterial ribosomal protein bL17 family. In terms of assembly, part of the 50S ribosomal subunit. Contacts protein L32.

This Mycobacterium leprae (strain Br4923) protein is Large ribosomal subunit protein bL17.